We begin with the raw amino-acid sequence, 360 residues long: CLIP domain-containing serine protease B4 (360 aa).

The first 24 residues, 1–24 (MIGNRVINLLIVATLALAGQTVLA), serve as a signal peptide directing secretion. One can recognise a Clip domain in the interval 30-83 (DCVNPVGEAGKCVLFRECQPLVDIYNKPVNTPDDTQFLTESRCGLYERKTLVCC). 4 disulfides stabilise this stretch: C31-C82, C41-C72, C47-C83, and C138-C154. A Peptidase S1 domain is found at 108-360 (VIGGQPTKID…YVDWIKDNIY (253 aa)). Active-site charge relay system residues include H153 and D213. N224 carries an N-linked (GlcNAc...) asparagine glycan. Disulfide bonds link C280/C297 and C307/C336. S311 (charge relay system) is an active-site residue.

It belongs to the peptidase S1 family. CLIP subfamily. Interacts with SRPN2 in the hemolymph of immune-challenged female mosquitoes; the interaction results in CLIPB4 inhibition. As to expression, in females, expressed in fat body, cuticle, thorax and ovaries.

Its subcellular location is the secreted. Serine protease which plays a role in the innate immune response against protozoan and bacterial pathogens, such as Plasmodium bergei, Staphylococcus aureus, Micrococcus luteus and Escherichia coli, by activating the melanization cascade. Cleaves and activates CLIPB8. In the resistant strain L3-5, involved in the melanization of killed parasite P.berghei ookinetes which results in their clearance. In the susceptible strain G3, appears to be dispensable for ookinete elimination which occurs by lysis. This is CLIP domain-containing serine protease B4 from Anopheles gambiae (African malaria mosquito).